The primary structure comprises 571 residues: Potassium-transporting ATPase potassium-binding subunit (571 aa).

A run of 12 helical transmembrane segments spans residues 5-25 (GWMQ…PLGG), 64-84 (LAYA…LYAL), 136-156 (GLTH…VALI), 179-199 (LYVL…QGMP), 220-240 (VGPV…GGFF), 254-274 (LSNF…TNVF), 285-305 (WAIL…TYWA), 330-350 (FGIA…CGAV), 375-395 (IIGG…VAIF), 421-441 (MLGI…ATVV), 488-508 (LAIG…AIAG), and 527-547 (GGLF…LTFF).

The protein belongs to the KdpA family. In terms of assembly, the system is composed of three essential subunits: KdpA, KdpB and KdpC.

It is found in the cell inner membrane. Functionally, part of the high-affinity ATP-driven potassium transport (or Kdp) system, which catalyzes the hydrolysis of ATP coupled with the electrogenic transport of potassium into the cytoplasm. This subunit binds the periplasmic potassium ions and delivers the ions to the membrane domain of KdpB through an intramembrane tunnel. The sequence is that of Potassium-transporting ATPase potassium-binding subunit from Methylorubrum extorquens (strain CM4 / NCIMB 13688) (Methylobacterium extorquens).